We begin with the raw amino-acid sequence, 259 residues long: Trans-aconitate 2-methyltransferase (259 aa).

It belongs to the methyltransferase superfamily. Tam family.

It is found in the cytoplasm. The enzyme catalyses trans-aconitate + S-adenosyl-L-methionine = (E)-3-(methoxycarbonyl)pent-2-enedioate + S-adenosyl-L-homocysteine. Functionally, catalyzes the S-adenosylmethionine monomethyl esterification of trans-aconitate. The sequence is that of Trans-aconitate 2-methyltransferase from Variovorax paradoxus (strain S110).